A 109-amino-acid polypeptide reads, in one-letter code: Large ribosomal subunit protein uL22 (109 aa).

It belongs to the universal ribosomal protein uL22 family. As to quaternary structure, part of the 50S ribosomal subunit.

Its function is as follows. This protein binds specifically to 23S rRNA; its binding is stimulated by other ribosomal proteins, e.g. L4, L17, and L20. It is important during the early stages of 50S assembly. It makes multiple contacts with different domains of the 23S rRNA in the assembled 50S subunit and ribosome. Functionally, the globular domain of the protein is located near the polypeptide exit tunnel on the outside of the subunit, while an extended beta-hairpin is found that lines the wall of the exit tunnel in the center of the 70S ribosome. This is Large ribosomal subunit protein uL22 from Ralstonia nicotianae (strain ATCC BAA-1114 / GMI1000) (Ralstonia solanacearum).